A 1012-amino-acid chain; its full sequence is Vacuolar protein-sorting protein bro-1 (1012 aa).

Positions 5–407 (PMISVPLKAT…ERVETANSEM (403 aa)) constitute a BRO1 domain. The stretch at 301-330 (ILADATKRHLATVKEKLEELNKENDMIYHQ) forms a coiled coil. Residues 558–578 (RKSRKSNPNSPATVEPNLLEA) are disordered. Residues 719–775 (LQSAKNWYKDMRQEAESLEKNVEAFVNNRRAEGAQLLNQIEQDRAANKSSHAALEQE) are a coiled coil. Disordered stretches follow at residues 784–812 (MSMD…SFAP) and 827–1012 (NFST…SAWK). Polar residues predominate over residues 827-842 (NFSTQYPASPPATQVP). Low complexity predominate over residues 844–857 (NPGGQQQTPYQQYN). Residues 892-913 (QTSFAQSRPYSLTTYGNPSALN) show a composition bias toward polar residues. Residues 914 to 930 (PQGGQPQQSQPGGYVPP) show a composition bias toward low complexity. Positions 931–945 (GFVPPPPPPGPPPLG) are enriched in pro residues. Residues 970-985 (PGSGQQGPQGQQGGWG) show a composition bias toward gly residues.

This sequence belongs to the BRO1 family.

It localises to the cytoplasm. It is found in the endosome. In terms of biological role, involved in concentration and sorting of cargo proteins of the multivesicular body (MVB) for incorporation into intralumenal vesicles. The polypeptide is Vacuolar protein-sorting protein bro-1 (bro-1) (Neurospora crassa (strain ATCC 24698 / 74-OR23-1A / CBS 708.71 / DSM 1257 / FGSC 987)).